The primary structure comprises 310 residues: 3,5-dioxohexanoate:acetyl-CoA acetone transferase (310 aa).

The Zn(2+) site is built by histidine 49, histidine 51, and glutamate 258.

This sequence belongs to the BKACE family. Zn(2+) is required as a cofactor.

It carries out the reaction 3,5-dioxohexanoate + acetyl-CoA = acetoacetyl-CoA + acetoacetate. In terms of biological role, catalyzes the condensation of 3,5-dioxohexanoate and acetyl-CoA, forming acetoacetate and acetoacetyl-CoA. May be involved in fatty acid biosynthesis rescue via triacetic acid lactone. In Paraburkholderia graminis (strain ATCC 700544 / DSM 17151 / LMG 18924 / NCIMB 13744 / C4D1M), this protein is 3,5-dioxohexanoate:acetyl-CoA acetone transferase.